Here is a 227-residue protein sequence, read N- to C-terminus: Ribosomal RNA large subunit methyltransferase E (227 aa).

5 residues coordinate S-adenosyl-L-methionine: G78, W80, D103, D119, and D143. Residue K183 is the Proton acceptor of the active site.

The protein belongs to the class I-like SAM-binding methyltransferase superfamily. RNA methyltransferase RlmE family.

Its subcellular location is the cytoplasm. The enzyme catalyses uridine(2552) in 23S rRNA + S-adenosyl-L-methionine = 2'-O-methyluridine(2552) in 23S rRNA + S-adenosyl-L-homocysteine + H(+). Its function is as follows. Specifically methylates the uridine in position 2552 of 23S rRNA at the 2'-O position of the ribose in the fully assembled 50S ribosomal subunit. The chain is Ribosomal RNA large subunit methyltransferase E from Rickettsia felis (strain ATCC VR-1525 / URRWXCal2) (Rickettsia azadi).